The primary structure comprises 131 residues: MWSEFKSFAMRGNIMDLAIGVVIGGAFGKIVTSLVEDIIMPLVGLLLGGLDFSGLAVTFGDAHIKYGSFIQTIVNFFIISFSIFIVIRTIGKLRRKKEAEEEAEEAEETDQQTELLTEIRDLLKQRAPHND.

Transmembrane regions (helical) follow at residues 14 to 34, 38 to 58, and 67 to 87; these read IMDLAIGVVIGGAFGKIVTSL, IIMPLVGLLLGGLDFSGLAVT, and GSFIQTIVNFFIISFSIFIVI.

The protein belongs to the MscL family. In terms of assembly, homopentamer.

The protein localises to the cell membrane. Its function is as follows. Channel that opens in response to stretch forces in the membrane lipid bilayer. May participate in the regulation of osmotic pressure changes within the cell. The polypeptide is Large-conductance mechanosensitive channel (Bacillus velezensis (strain DSM 23117 / BGSC 10A6 / LMG 26770 / FZB42) (Bacillus amyloliquefaciens subsp. plantarum)).